Consider the following 649-residue polypeptide: Probable potassium transport system protein Kup (649 aa).

12 consecutive transmembrane segments (helical) span residues 1 to 21 (MAIV…LYTM), 42 to 62 (ILSL…VFIA), 84 to 104 (GAWL…DSVL), 126 to 146 (IMSG…VCLF), 159 to 179 (TFGT…LVNL), 195 to 215 (VEFL…TVFL), 235 to 255 (IYFT…GQGA), 286 to 306 (VAVL…ITGA), 334 to 354 (LYIP…LAMF), 364 to 384 (YGLA…VYIW), 390 to 410 (VGAV…FFAS), and 414 to 434 (FLHG…IMYT).

Belongs to the HAK/KUP transporter (TC 2.A.72) family.

The protein localises to the cell membrane. The catalysed reaction is K(+)(in) + H(+)(in) = K(+)(out) + H(+)(out). Transport of potassium into the cell. Likely operates as a K(+):H(+) symporter. The sequence is that of Probable potassium transport system protein Kup from Bifidobacterium adolescentis (strain ATCC 15703 / DSM 20083 / NCTC 11814 / E194a).